A 445-amino-acid polypeptide reads, in one-letter code: KICSTOR subunit 2 (445 aa).

It belongs to the KICS2 family. As to quaternary structure, part of the KICSTOR complex composed of KPTN, ITFG2, KICS2 and SZT2. SZT2 probably serves as a link between the other three proteins in the KICSTOR complex and may mediate the direct interaction with the GATOR complex via GATOR1. The KICSTOR complex interacts directly with the GATOR1 complex and most probably indirectly with the GATOR2 complex in an amino acid-independent manner.

It localises to the lysosome membrane. Functionally, as part of the KICSTOR complex functions in the amino acid-sensing branch of the TORC1 signaling pathway. Recruits, in an amino acid-independent manner, the GATOR1 complex to the lysosomal membranes and allows its interaction with GATOR2 and the RAG GTPases. Functions upstream of the RAG GTPases and is required to negatively regulate mTORC1 signaling in absence of amino acids. In absence of the KICSTOR complex mTORC1 is constitutively localized to the lysosome and activated. The KICSTOR complex is also probably involved in the regulation of mTORC1 by glucose. The sequence is that of KICSTOR subunit 2 from Mus musculus (Mouse).